A 647-amino-acid polypeptide reads, in one-letter code: Leishmanolysin-like peptidase (647 aa).

Residue histidine 264 coordinates Zn(2+). Residue glutamate 265 is part of the active site. The Zn(2+) site is built by histidine 268 and histidine 370.

It belongs to the peptidase M8 family. The cofactor is Zn(2+). Expressed in all cell lines analyzed.

It is found in the cytoplasm. The protein resides in the lipid droplet. Metalloprotease. This is Leishmanolysin-like peptidase (LMLN) from Homo sapiens (Human).